The following is a 174-amino-acid chain: Small ribosomal subunit protein uS12m (174 aa).

This sequence belongs to the universal ribosomal protein uS12 family. As to quaternary structure, component of the mitochondrial small ribosomal subunit (mt-SSU). Mature N.crassa 74S mitochondrial ribosomes consist of a small (37S) and a large (54S) subunit. The 37S small subunit contains a 16S ribosomal RNA (16S mt-rRNA) and 32 different proteins. The 54S large subunit contains a 23S rRNA (23S mt-rRNA) and 42 different proteins. uS12m forms part of the decoding center of the mt-SSU.

Its subcellular location is the mitochondrion. Functionally, component of the mitochondrial ribosome (mitoribosome), a dedicated translation machinery responsible for the synthesis of mitochondrial genome-encoded proteins, including at least some of the essential transmembrane subunits of the mitochondrial respiratory chain. The mitoribosomes are attached to the mitochondrial inner membrane and translation products are cotranslationally integrated into the membrane. The protein is Small ribosomal subunit protein uS12m (mrps12) of Neurospora crassa (strain ATCC 24698 / 74-OR23-1A / CBS 708.71 / DSM 1257 / FGSC 987).